Reading from the N-terminus, the 484-residue chain is Glutamyl-tRNA(Gln) amidotransferase subunit A (484 aa).

Residues Lys76 and Ser151 each act as charge relay system in the active site. Ser175 serves as the catalytic Acyl-ester intermediate.

The protein belongs to the amidase family. GatA subfamily. As to quaternary structure, heterotrimer of A, B and C subunits.

It carries out the reaction L-glutamyl-tRNA(Gln) + L-glutamine + ATP + H2O = L-glutaminyl-tRNA(Gln) + L-glutamate + ADP + phosphate + H(+). Its function is as follows. Allows the formation of correctly charged Gln-tRNA(Gln) through the transamidation of misacylated Glu-tRNA(Gln) in organisms which lack glutaminyl-tRNA synthetase. The reaction takes place in the presence of glutamine and ATP through an activated gamma-phospho-Glu-tRNA(Gln). The polypeptide is Glutamyl-tRNA(Gln) amidotransferase subunit A (Alkalilimnicola ehrlichii (strain ATCC BAA-1101 / DSM 17681 / MLHE-1)).